The following is a 508-amino-acid chain: Maturase K (508 aa).

It belongs to the intron maturase 2 family. MatK subfamily.

It is found in the plastid. The protein localises to the chloroplast. Its function is as follows. Usually encoded in the trnK tRNA gene intron. Probably assists in splicing its own and other chloroplast group II introns. The sequence is that of Maturase K from Pelargonium hortorum (Common geranium).